The primary structure comprises 253 residues: uncharacterized protein (253 aa).

The segment covering 200–209 (TGREHAHKGP) has biased composition (basic and acidic residues). Disordered stretches follow at residues 200 to 225 (TGRE…PNPA) and 234 to 253 (QHSP…SAAT).

Most abundantly expressed in gastrointestinal tissues. Expressed at lower levels in kidney and placenta. Expressed in fetal brain, liver, placenta, kidney and lung.

This is an uncharacterized protein from Homo sapiens (Human).